The chain runs to 218 residues: MGAVRLAVIDYEAGNLHSACKGLERAGAEVQLVTEPTGLAAFDGIVLPGDGAFDPAMQQLRARGFGKAIREAVERQQPFLGICLGLQVLFESSEEGTEPGLSIVPGRVQRFRPEAGLRIPHMGWNQLQLTQAHSPLWAGIPDQTWAYFVHSYHGVPSDPAWVAATTQHGSQTCVAAIARGALFATQFHPEKSGPYGLKMLRNFVEFVARCSPLSAPRA.

Positions 5–213 constitute a Glutamine amidotransferase type-1 domain; sequence RLAVIDYEAG…VEFVARCSPL (209 aa). Catalysis depends on Cys83, which acts as the Nucleophile. Catalysis depends on residues His188 and Glu190.

As to quaternary structure, heterodimer of HisH and HisF.

It is found in the cytoplasm. It catalyses the reaction 5-[(5-phospho-1-deoxy-D-ribulos-1-ylimino)methylamino]-1-(5-phospho-beta-D-ribosyl)imidazole-4-carboxamide + L-glutamine = D-erythro-1-(imidazol-4-yl)glycerol 3-phosphate + 5-amino-1-(5-phospho-beta-D-ribosyl)imidazole-4-carboxamide + L-glutamate + H(+). The enzyme catalyses L-glutamine + H2O = L-glutamate + NH4(+). It participates in amino-acid biosynthesis; L-histidine biosynthesis; L-histidine from 5-phospho-alpha-D-ribose 1-diphosphate: step 5/9. Its function is as follows. IGPS catalyzes the conversion of PRFAR and glutamine to IGP, AICAR and glutamate. The HisH subunit catalyzes the hydrolysis of glutamine to glutamate and ammonia as part of the synthesis of IGP and AICAR. The resulting ammonia molecule is channeled to the active site of HisF. This chain is Imidazole glycerol phosphate synthase subunit HisH, found in Synechococcus sp. (strain JA-2-3B'a(2-13)) (Cyanobacteria bacterium Yellowstone B-Prime).